The primary structure comprises 84 residues: MSDDERVTKPFKFVTGVDARFPNVNQTKHCWQNYVDYHKCILAKGEDFAPCRQFWLAYRSLCPSGWYQRWDEQREAGNFPVKLE.

The 44-residue stretch at 27-70 (TKHCWQNYVDYHKCILAKGEDFAPCRQFWLAYRSLCPSGWYQRW) folds into the CHCH domain. Positions 30–40 (CWQNYVDYHKC) match the Cx9C motif motif. 2 disulfide bridges follow: cysteine 30–cysteine 62 and cysteine 40–cysteine 51. The Cx10C motif signature appears at 51–62 (CRQFWLAYRSLC).

This sequence belongs to the cytochrome c oxidase subunit 6B family. As to quaternary structure, component of the cytochrome c oxidase (complex IV, CIV), a multisubunit enzyme composed of 11 subunits. The complex is composed of a catalytic core of 3 subunits Cox1, Cox2 and Cox3, encoded in the mitochondrial DNA, and 8 supernumerary subunits Cox4, Cox5a/Cox5, Cox6, Cox7, Cox8, Cox7a/Cox9, Cox6b/Cox12 and Cox6a/Cox13, which are encoded in the nuclear genome. The complex exists as a monomer or a dimer and forms respiratory supercomplexes (SCs) in the inner mitochondrial membrane with NADH-ubiquinone oxidoreductase (complex I, CI) and ubiquinol-cytochrome c oxidoreductase (cytochrome b-c1 complex, complex III, CIII), resulting in various different assemblies (supercomplexes I(1)IV(1), I(1)III(3)IV(2), III(2)IV(1) and III(2)IV(2) as well as larger supercomplexes of compositions like I(1)III(2)IV(5-6)).

The protein resides in the mitochondrion inner membrane. Its pathway is energy metabolism; oxidative phosphorylation. Functionally, component of the cytochrome c oxidase, the last enzyme in the mitochondrial electron transport chain which drives oxidative phosphorylation. The respiratory chain contains 3 multisubunit complexes succinate dehydrogenase (complex II, CII), ubiquinol-cytochrome c oxidoreductase (cytochrome b-c1 complex, complex III, CIII) and cytochrome c oxidase (complex IV, CIV), that cooperate to transfer electrons derived from NADH and succinate to molecular oxygen, creating an electrochemical gradient over the inner membrane that drives transmembrane transport and the ATP synthase. Cytochrome c oxidase is the component of the respiratory chain that catalyzes the reduction of oxygen to water. Electrons originating from reduced cytochrome c in the intermembrane space (IMS) are transferred via the dinuclear copper A center (CU(A)) of Cox2 and heme A of Cox1 to the active site in Cox1, a binuclear center (BNC) formed by heme A3 and copper B (CU(B)). The BNC reduces molecular oxygen to 2 water molecules using 4 electrons from cytochrome c in the IMS and 4 protons from the mitochondrial matrix. The sequence is that of Cytochrome c oxidase subunit 12, mitochondrial (cox-13) from Neurospora crassa (strain ATCC 24698 / 74-OR23-1A / CBS 708.71 / DSM 1257 / FGSC 987).